A 178-amino-acid polypeptide reads, in one-letter code: Ribosome maturation factor RimP (178 aa).

The protein belongs to the RimP family.

The protein resides in the cytoplasm. Functionally, required for maturation of 30S ribosomal subunits. The protein is Ribosome maturation factor RimP of Streptococcus pyogenes serotype M4 (strain MGAS10750).